Consider the following 164-residue polypeptide: Thiol peroxidase (164 aa).

The 147-residue stretch at 16–162 (LQVGDIAKDF…YEAAINAAKI (147 aa)) folds into the Thioredoxin domain. Cys58 serves as the catalytic Cysteine sulfenic acid (-SOH) intermediate. Residues Cys58 and Cys92 are joined by a disulfide bond.

This sequence belongs to the peroxiredoxin family. Tpx subfamily. Homodimer.

It catalyses the reaction a hydroperoxide + [thioredoxin]-dithiol = an alcohol + [thioredoxin]-disulfide + H2O. Functionally, thiol-specific peroxidase that catalyzes the reduction of hydrogen peroxide and organic hydroperoxides to water and alcohols, respectively. Plays a role in cell protection against oxidative stress by detoxifying peroxides. The polypeptide is Thiol peroxidase (Streptococcus agalactiae serotype III (strain NEM316)).